A 655-amino-acid polypeptide reads, in one-letter code: Protein movement modulator (655 aa).

Over 1-54 (MEQPSILVKILHSIPHVNYTFRRVNDTFNPDSDVYLEPTNNKLQCQQKGIELQS) the chain is Extracellular. Asn-18 and Asn-25 each carry an N-linked (GlcNAc...) asparagine glycan. Residues 55 to 75 (LVILASIPAGLLIGSLLGLLL) traverse the membrane as a helical segment. The Cytoplasmic portion of the chain corresponds to 76–95 (YLLTRCCDRRQRKPSAQRCQ). The helical transmembrane segment at 96–116 (SCSLVIITLMTCAAIGLGLYG) threads the bilayer. The Extracellular segment spans residues 117 to 231 (NDDFHNGLLQ…GEFYESIRWP (115 aa)). Asn-171, Asn-188, and Asn-211 each carry an N-linked (GlcNAc...) asparagine glycan. A helical membrane pass occupies residues 232 to 252 (ATLAFLTVLLLLCTVLVIGVA). Residues 253 to 258 (RRSRCT) are Cytoplasmic-facing. Residues 259–279 (LIFFSVSGLFCIIICWLLAGV) traverse the membrane as a helical segment. The Extracellular portion of the chain corresponds to 280 to 401 (YLASSVAAGD…ALRGLCGGGL (122 aa)). N-linked (GlcNAc...) asparagine glycosylation is found at Asn-326 and Asn-372. The chain crosses the membrane as a helical span at residues 402–422 (LGLSLMMVAGLLTSFLLTILV). Over 423-655 (YADSHAWIYL…CKTLESNDFY (233 aa)) the chain is Cytoplasmic. Positions 446–576 (APLFPASNAP…NNHYNNTQHR (131 aa)) are disordered. A compositionally biased stretch (low complexity) spans 450–464 (PASNAPSASISPTAP). Residues 465–480 (LSTGTINRTLLHHQQA) are compositionally biased toward polar residues. Residues 482–509 (SGGGSGTLPGSGGGAGAGGGVGANGHNG) are compositionally biased toward gly residues. Low complexity-rich tracts occupy residues 526–539 (SPSSQSSHTSSTAT) and 546–576 (SYHNSHQQHNNHLYSNHYSHSNNHYNNTQHR). A phosphoserine mark is found at Ser-597 and Ser-599.

Belongs to the tweety family.

It localises to the cell membrane. It catalyses the reaction chloride(in) = chloride(out). Probable large-conductance Ca(2+)-activated chloride channel. Modulator of embryonic movement. In Drosophila melanogaster (Fruit fly), this protein is Protein movement modulator.